The following is a 308-amino-acid chain: UDP-N-acetylenolpyruvoylglucosamine reductase (308 aa).

In terms of domain architecture, FAD-binding PCMH-type spans glutamine 32 to glycine 197. The active site involves arginine 176. Serine 226 serves as the catalytic Proton donor. Glutamate 296 is an active-site residue.

The protein belongs to the MurB family. Requires FAD as cofactor.

Its subcellular location is the cytoplasm. The enzyme catalyses UDP-N-acetyl-alpha-D-muramate + NADP(+) = UDP-N-acetyl-3-O-(1-carboxyvinyl)-alpha-D-glucosamine + NADPH + H(+). It functions in the pathway cell wall biogenesis; peptidoglycan biosynthesis. Functionally, cell wall formation. This is UDP-N-acetylenolpyruvoylglucosamine reductase from Staphylococcus saprophyticus subsp. saprophyticus (strain ATCC 15305 / DSM 20229 / NCIMB 8711 / NCTC 7292 / S-41).